The chain runs to 917 residues: Probable dipeptidyl-aminopeptidase B (917 aa).

The segment at 1 to 75 is disordered; that stretch reads MTVGRRLNDE…KYRDDVEEDW (75 aa). Residues 1–93 lie on the Cytoplasmic side of the membrane; sequence MTVGRRLNDE…NAKPSQRRTQ (93 aa). The span at 27–39 shows a compositional bias: low complexity; that stretch reads DSSSTASVSLTLV. Residues 40–49 are compositionally biased toward polar residues; the sequence is DGTNHTTAKP. Basic and acidic residues predominate over residues 57-69; sequence VSRDRYADEKYRD. A helical; Signal-anchor for type II membrane protein transmembrane segment spans residues 94 to 114; it reads IVFWLLVALCVGGWAVAFLFF. Over 115–917 the chain is Vacuolar; that stretch reads VTSPGNTIST…KRVIRRLLHR (803 aa). The segment covering 124-133 has biased composition (polar residues); it reads TTPDTGSGSP. The interval 124–150 is disordered; it reads TTPDTGSGSPDSDVIKPGSPPAGKKIP. Asn206, Asn302, and Asn354 each carry an N-linked (GlcNAc...) asparagine glycan. Ser759 serves as the catalytic Charge relay system. An N-linked (GlcNAc...) asparagine glycan is attached at Asn818. Residues Asp836 and His869 each act as charge relay system in the active site.

This sequence belongs to the peptidase S9B family.

The protein localises to the vacuole membrane. It catalyses the reaction Release of an N-terminal dipeptide, Xaa-Yaa-|-Zaa-, from a polypeptide, preferentially when Yaa is Pro, provided Zaa is neither Pro nor hydroxyproline.. Functionally, type IV dipeptidyl-peptidase which removes N-terminal dipeptides sequentially from polypeptides having unsubstituted N-termini provided that the penultimate residue is proline. This chain is Probable dipeptidyl-aminopeptidase B (DAPB), found in Arthroderma gypseum (strain ATCC MYA-4604 / CBS 118893) (Microsporum gypseum).